Reading from the N-terminus, the 65-residue chain is Sodium channel neurotoxin MeuNaTxalpha-9 (65 aa).

One can recognise an LCN-type CS-alpha/beta domain in the interval 2-64 (RDGYIANDRN…VPIRIPGECR (63 aa)). 4 disulfides stabilise this stretch: cysteine 12–cysteine 63, cysteine 16–cysteine 36, cysteine 22–cysteine 46, and cysteine 26–cysteine 48. Arginine 64 is modified (arginine amide).

Belongs to the long (4 C-C) scorpion toxin superfamily. Sodium channel inhibitor family. Alpha subfamily. In terms of tissue distribution, expressed by the venom gland.

Its subcellular location is the secreted. Alpha toxins bind voltage-independently at site-3 of sodium channels (Nav) and inhibit the inactivation of the activated channels, thereby blocking neuronal transmission. This chain is Sodium channel neurotoxin MeuNaTxalpha-9, found in Mesobuthus eupeus (Lesser Asian scorpion).